Consider the following 142-residue polypeptide: Large ribosomal subunit protein uL11 (142 aa).

This sequence belongs to the universal ribosomal protein uL11 family. As to quaternary structure, part of the ribosomal stalk of the 50S ribosomal subunit. Interacts with L10 and the large rRNA to form the base of the stalk. L10 forms an elongated spine to which L12 dimers bind in a sequential fashion forming a multimeric L10(L12)X complex. Post-translationally, one or more lysine residues are methylated.

Functionally, forms part of the ribosomal stalk which helps the ribosome interact with GTP-bound translation factors. The chain is Large ribosomal subunit protein uL11 from Akkermansia muciniphila (strain ATCC BAA-835 / DSM 22959 / JCM 33894 / BCRC 81048 / CCUG 64013 / CIP 107961 / Muc).